A 192-amino-acid polypeptide reads, in one-letter code: Adenylate kinase (192 aa).

12 to 17 (GSGKTT) is an ATP binding site. The segment at 34–63 (STGDLLRAEVASGSELGKTIDSFISKGNLV) is NMP. Residues Thr-35, Arg-40, 61–63 (NLV), 88–91 (GYPR), and Gln-95 each bind AMP. The tract at residues 130 to 136 (GRNRGTD) is LID. Arg-131 contributes to the ATP binding site. Residues Arg-133 and Arg-145 each coordinate AMP. An ATP-binding site is contributed by Arg-173.

This sequence belongs to the adenylate kinase family. Monomer.

The protein localises to the cytoplasm. It catalyses the reaction AMP + ATP = 2 ADP. It functions in the pathway purine metabolism; AMP biosynthesis via salvage pathway; AMP from ADP: step 1/1. Catalyzes the reversible transfer of the terminal phosphate group between ATP and AMP. Plays an important role in cellular energy homeostasis and in adenine nucleotide metabolism. The sequence is that of Adenylate kinase from Campylobacter jejuni (strain RM1221).